The primary structure comprises 324 residues: Adenosine kinase (324 aa).

Substrate is bound by residues S8, D12, S36, G48, N52, F102, F116, and 172–173; that span reads QQ. ATP-binding positions include N195, 223 to 228, and G256; that span reads TLGPKG. D257 contacts substrate. D257 (proton acceptor) is an active-site residue.

This sequence belongs to the carbohydrate kinase PfkB family. As to quaternary structure, homodimer. The cofactor is Mg(2+).

The enzyme catalyses adenosine + ATP = AMP + ADP + H(+). The catalysed reaction is adenosine + GTP = GDP + AMP + H(+). It carries out the reaction dGTP + adenosine = dGDP + AMP + H(+). Its pathway is purine metabolism; AMP biosynthesis via salvage pathway; AMP from adenosine: step 1/1. Its function is as follows. Catalyzes the phosphorylation of adenosine to adenosine monophosphate (AMP). Prefers dGTP and GTP to ATP as phosphate donors in vitro. The sequence is that of Adenosine kinase (adoK) from Mycobacterium bovis (strain ATCC BAA-935 / AF2122/97).